Here is a 321-residue protein sequence, read N- to C-terminus: Lipoyl synthase (321 aa).

[4Fe-4S] cluster-binding residues include C60, C65, C71, C86, C90, C93, and S299. The 217-residue stretch at 72–288 (WEKKHATFMI…ETIGRTKGFL (217 aa)) folds into the Radical SAM core domain.

Belongs to the radical SAM superfamily. Lipoyl synthase family. [4Fe-4S] cluster serves as cofactor.

It is found in the cytoplasm. The catalysed reaction is [[Fe-S] cluster scaffold protein carrying a second [4Fe-4S](2+) cluster] + N(6)-octanoyl-L-lysyl-[protein] + 2 oxidized [2Fe-2S]-[ferredoxin] + 2 S-adenosyl-L-methionine + 4 H(+) = [[Fe-S] cluster scaffold protein] + N(6)-[(R)-dihydrolipoyl]-L-lysyl-[protein] + 4 Fe(3+) + 2 hydrogen sulfide + 2 5'-deoxyadenosine + 2 L-methionine + 2 reduced [2Fe-2S]-[ferredoxin]. It participates in protein modification; protein lipoylation via endogenous pathway; protein N(6)-(lipoyl)lysine from octanoyl-[acyl-carrier-protein]: step 2/2. Functionally, catalyzes the radical-mediated insertion of two sulfur atoms into the C-6 and C-8 positions of the octanoyl moiety bound to the lipoyl domains of lipoate-dependent enzymes, thereby converting the octanoylated domains into lipoylated derivatives. The sequence is that of Lipoyl synthase from Brucella anthropi (strain ATCC 49188 / DSM 6882 / CCUG 24695 / JCM 21032 / LMG 3331 / NBRC 15819 / NCTC 12168 / Alc 37) (Ochrobactrum anthropi).